We begin with the raw amino-acid sequence, 378 residues long: 3-dehydroquinate synthase (378 aa).

NAD(+) contacts are provided by residues 115-119 (GVVGD), 139-140 (TS), Lys-152, and Lys-161. The Zn(2+) site is built by Glu-194, His-256, and His-275.

Belongs to the sugar phosphate cyclases superfamily. Dehydroquinate synthase family. Co(2+) is required as a cofactor. The cofactor is Zn(2+). NAD(+) serves as cofactor.

It is found in the cytoplasm. It catalyses the reaction 7-phospho-2-dehydro-3-deoxy-D-arabino-heptonate = 3-dehydroquinate + phosphate. Its pathway is metabolic intermediate biosynthesis; chorismate biosynthesis; chorismate from D-erythrose 4-phosphate and phosphoenolpyruvate: step 2/7. Catalyzes the conversion of 3-deoxy-D-arabino-heptulosonate 7-phosphate (DAHP) to dehydroquinate (DHQ). This chain is 3-dehydroquinate synthase, found in Brucella abortus biovar 1 (strain 9-941).